The sequence spans 477 residues: Argininosuccinate synthase (477 aa).

Residues 17-25 (AFSGGLDTS) and Ala-43 contribute to the ATP site. Tyr-99 contacts L-citrulline. Positions 129 and 131 each coordinate ATP. L-aspartate is bound by residues Thr-131, Asn-135, and Asp-136. Asn-135 contacts L-citrulline. Asp-136 serves as a coordination point for ATP. L-citrulline is bound by residues Arg-139 and Ser-192. An ATP-binding site is contributed by Asp-194. Residues Thr-201, Glu-203, and Glu-280 each coordinate L-citrulline. The disordered stretch occupies residues 450-477 (DQITENPEVQAEPEEEALDAAAMEAGTD). Low complexity predominate over residues 468–477 (DAAAMEAGTD).

This sequence belongs to the argininosuccinate synthase family. Type 2 subfamily. As to quaternary structure, homotetramer.

It localises to the cytoplasm. It carries out the reaction L-citrulline + L-aspartate + ATP = 2-(N(omega)-L-arginino)succinate + AMP + diphosphate + H(+). The protein operates within amino-acid biosynthesis; L-arginine biosynthesis; L-arginine from L-ornithine and carbamoyl phosphate: step 2/3. This Nocardioides sp. (strain ATCC BAA-499 / JS614) protein is Argininosuccinate synthase.